A 122-amino-acid polypeptide reads, in one-letter code: Large ribosomal subunit protein uL14 (122 aa).

This sequence belongs to the universal ribosomal protein uL14 family. As to quaternary structure, part of the 50S ribosomal subunit. Forms a cluster with proteins L3 and L19. In the 70S ribosome, L14 and L19 interact and together make contacts with the 16S rRNA in bridges B5 and B8.

In terms of biological role, binds to 23S rRNA. Forms part of two intersubunit bridges in the 70S ribosome. The polypeptide is Large ribosomal subunit protein uL14 (Thermoanaerobacter pseudethanolicus (strain ATCC 33223 / 39E) (Clostridium thermohydrosulfuricum)).